We begin with the raw amino-acid sequence, 313 residues long: Nucleoside diphosphate-linked moiety X motif 6 (313 aa).

The Nudix hydrolase domain maps to Thr138–Tyr270.

Belongs to the Nudix hydrolase family. As to quaternary structure, monomer and homodimer.

The protein localises to the cytoplasm. It is found in the nucleus. It localises to the mitochondrion. In terms of biological role, may contribute to the regulation of cell proliferation. The polypeptide is Nucleoside diphosphate-linked moiety X motif 6 (Nudt6) (Mus musculus (Mouse)).